Here is a 118-residue protein sequence, read N- to C-terminus: Co-chaperonin GroES (118 aa).

This sequence belongs to the GroES chaperonin family. Heptamer of 7 subunits arranged in a ring. Interacts with the chaperonin GroEL.

The protein localises to the cytoplasm. Functionally, together with the chaperonin GroEL, plays an essential role in assisting protein folding. The GroEL-GroES system forms a nano-cage that allows encapsulation of the non-native substrate proteins and provides a physical environment optimized to promote and accelerate protein folding. GroES binds to the apical surface of the GroEL ring, thereby capping the opening of the GroEL channel. The polypeptide is Co-chaperonin GroES (Helicobacter pylori (strain G27)).